Here is a 317-residue protein sequence, read N- to C-terminus: 3',5'-bisphosphate nucleotidase (317 aa).

Residue Asp-46 is the Proton acceptor of the active site. 4 residues coordinate Mg(2+): Glu-69, Asp-118, Ile-120, and Asp-121. Thr-123 functions as the Proton acceptor in the catalytic mechanism. Thr-123 serves as a coordination point for adenosine 3',5'-bisphosphate. AMP is bound by residues Ser-198, His-203, Ser-227, Lys-230, Arg-244, Tyr-251, and Asp-257. The adenosine 3',5'-bisphosphate site is built by His-203, Ser-227, Lys-230, and Arg-244. Residue Asp-257 participates in Mg(2+) binding. Asp-257 contacts adenosine 3',5'-bisphosphate.

Belongs to the inositol monophosphatase superfamily. As to quaternary structure, monomer. It depends on Mg(2+) as a cofactor.

It is found in the cytoplasm. The enzyme catalyses adenosine 3',5'-bisphosphate + H2O = AMP + phosphate. The catalysed reaction is 1D-myo-inositol 1,4-bisphosphate + H2O = 1D-myo-inositol 4-phosphate + phosphate. Inhibited by Li(2+). Phosphatase that converts 3'-phosphoadenosine 5'-phosphate (PAP) to AMP. Is also able to hydrolyze inositol 1,4-bisphosphate but with less efficiency. This chain is 3',5'-bisphosphate nucleotidase, found in Entamoeba histolytica (strain ATCC 30459 / HM-1:IMSS / ABRM).